The primary structure comprises 527 residues: NAD(P)H-quinone oxidoreductase chain 4 1 (527 aa).

Transmembrane regions (helical) follow at residues F5–I25, W35–G55, L90–F110, P112–V132, L136–W156, F168–F188, L211–H231, T242–L262, A274–T294, I310–G330, A331–A351, L386–T406, V416–M436, and V463–V483.

It belongs to the complex I subunit 4 family.

It localises to the cellular thylakoid membrane. The catalysed reaction is a plastoquinone + NADH + (n+1) H(+)(in) = a plastoquinol + NAD(+) + n H(+)(out). It catalyses the reaction a plastoquinone + NADPH + (n+1) H(+)(in) = a plastoquinol + NADP(+) + n H(+)(out). In terms of biological role, NDH-1 shuttles electrons from NAD(P)H, via FMN and iron-sulfur (Fe-S) centers, to quinones in the respiratory chain. The immediate electron acceptor for the enzyme in this species is believed to be plastoquinone. Couples the redox reaction to proton translocation (for every two electrons transferred, four hydrogen ions are translocated across the cytoplasmic membrane), and thus conserves the redox energy in a proton gradient. In Trichodesmium erythraeum (strain IMS101), this protein is NAD(P)H-quinone oxidoreductase chain 4 1.